Consider the following 232-residue polypeptide: AA9 family lytic polysaccharide monooxygenase C (232 aa).

The first 19 residues, 1-19 (MKAAVSLALLVAVAGAASA), serve as a signal peptide directing secretion. H20 and H91 together coordinate Cu(2+). The cysteines at positions 61 and 180 are disulfide-linked. Residues H166 and Q175 each coordinate O2. Y177 is a binding site for Cu(2+). N184 carries N-linked (GlcNAc...) asparagine glycosylation.

This sequence belongs to the polysaccharide monooxygenase AA9 family. Requires Cu(2+) as cofactor.

It is found in the secreted. It catalyses the reaction [(1-&gt;4)-beta-D-glucosyl]n+m + reduced acceptor + O2 = 4-dehydro-beta-D-glucosyl-[(1-&gt;4)-beta-D-glucosyl]n-1 + [(1-&gt;4)-beta-D-glucosyl]m + acceptor + H2O.. Lytic polysaccharide monooxygenase (LPMO) that depolymerizes crystalline and amorphous polysaccharides via the oxidation of scissile alpha- or beta-(1-4)-glycosidic bonds, yielding C1 or C4 oxidation products. Catalysis by LPMOs requires the reduction of the active-site copper from Cu(II) to Cu(I) by a reducing agent and H(2)O(2) or O(2) as a cosubstrate. This is AA9 family lytic polysaccharide monooxygenase C from Malbranchea cinnamomea (Thermophilic fungus).